The following is a 201-amino-acid chain: CASP-like protein 2B2 (201 aa).

Residues 1-28 lie on the Cytoplasmic side of the membrane; that stretch reads MSYLGVGVSPGNVTGSSTKMKLIDRKVR. Residues 29-49 form a helical membrane-spanning segment; it reads VTELILRSLVCAFALVAAILV. Topologically, residues 50–71 are extracellular; it reads ATDVQVREIFTIQKKAKFTDMK. Residues 72-92 form a helical membrane-spanning segment; that stretch reads ALVFLVVINGIAAGYSLVQAV. At 93 to 108 the chain is on the cytoplasmic side; the sequence is CCLVGLMKGSVLLSEP. The chain crosses the membrane as a helical span at residues 109-129; that stretch reads LAWAIFFGDQAVAYLCVAGVA. The Extracellular segment spans residues 130–166; the sequence is AAAQSAAFAKLGQPELQWMKICDMYGKFCNQVGEGIA. A helical membrane pass occupies residues 167–187; that stretch reads SALFACIGMVLISCISAFGVF. Residues 188-201 are Cytoplasmic-facing; sequence RLYGGSKPRQSSRW.

Belongs to the Casparian strip membrane proteins (CASP) family. In terms of assembly, homodimer and heterodimers.

The protein localises to the cell membrane. The protein is CASP-like protein 2B2 of Arabidopsis lyrata subsp. lyrata (Lyre-leaved rock-cress).